The following is a 147-amino-acid chain: Sulfur acceptor protein CsdE (147 aa).

The active-site Cysteine persulfide intermediate is the cysteine 61. Cysteine 61 is subject to Cysteine persulfide.

This sequence belongs to the SufE family. In terms of assembly, homodimer. Forms a heterodimer with CsdA. Interacts with CsdA and with TcdA/CsdL.

Stimulates the cysteine desulfurase activity of CsdA. Contains a cysteine residue (Cys-61) that acts to accept sulfur liberated via the desulfurase activity of CsdA. May be able to transfer sulfur to TcdA/CsdL. Seems to support the function of TcdA in the generation of cyclic threonylcarbamoyladenosine at position 37 (ct(6)A37) in tRNAs that read codons beginning with adenine. Does not appear to participate in Fe/S biogenesis. This chain is Sulfur acceptor protein CsdE (csdE), found in Escherichia coli (strain K12).